We begin with the raw amino-acid sequence, 460 residues long: MLKVLIPTIMLFPTIWLSSSKWLWTTTTMNSFLIAFISLTWLKWTSDTGWNASNSYMAADPLSTPLLVLTCWLLPLMILASQNHINSEPVNRQRMYITLLASLQTFMIMAFGATKIIMFYIMFEATLIPTLIIITRWGNQAERLNAGTYFLFYTLAGSLPLLVALLLLQQSTGTLSMLVLQYSDPLLLNSWGHKIWWAGCLIAFLVKMPLYGMHLWLPKAHVEAPVAGSMILAAVLLKLGGYGMMRMMVMLDPLSKQLAYPFIILALWGVIMTGLVCLRQTDLKSLIAYSSVGHMGLVAGGILIQTPWGFTGAIILMIAHGLTSSALFCLANTSYERTHSRTMILARGLQMVLPLATVWWFIANLANLALPPLPNLMGELMIITALFNWSPWTIIITGMGTLITANYSLYMFLTSQRGSIPEHITNLSPSHTREHLLMTLHLIPIILLMLKPELMWGWCN.

A run of 13 helical transmembrane segments spans residues S20 to L42, P61 to S81, R94 to A113, T114 to I134, T148 to L168, I195 to L215, P225 to M245, L258 to L278, S285 to I304, W308 to L330, M351 to P371, L380 to G400, and L436 to W456.

The protein belongs to the complex I subunit 4 family. In terms of assembly, core subunit of respiratory chain NADH dehydrogenase (Complex I) which is composed of 45 different subunits.

It is found in the mitochondrion inner membrane. It carries out the reaction a ubiquinone + NADH + 5 H(+)(in) = a ubiquinol + NAD(+) + 4 H(+)(out). In terms of biological role, core subunit of the mitochondrial membrane respiratory chain NADH dehydrogenase (Complex I) which catalyzes electron transfer from NADH through the respiratory chain, using ubiquinone as an electron acceptor. Essential for the catalytic activity and assembly of complex I. The protein is NADH-ubiquinone oxidoreductase chain 4 (mt-nd4) of Danio rerio (Zebrafish).